Here is a 156-residue protein sequence, read N- to C-terminus: Small ribosomal subunit protein uS7 (156 aa).

This sequence belongs to the universal ribosomal protein uS7 family. Part of the 30S ribosomal subunit. Contacts proteins S9 and S11.

One of the primary rRNA binding proteins, it binds directly to 16S rRNA where it nucleates assembly of the head domain of the 30S subunit. Is located at the subunit interface close to the decoding center, probably blocks exit of the E-site tRNA. This chain is Small ribosomal subunit protein uS7, found in Glaesserella parasuis serovar 5 (strain SH0165) (Haemophilus parasuis).